A 288-amino-acid polypeptide reads, in one-letter code: Acyl-CoA-binding domain-containing protein 6 homolog (288 aa).

One can recognise an ACB domain in the interval 6–94 (IENKFKLAVD…VNALSPGWDS (89 aa)). An acyl-CoA contacts are provided by residues 36–40 (YCNYK), K62, and Y81. ANK repeat units follow at residues 200 to 229 (DGRTALIWACDRGYFEIAKLLIENGSNVNV) and 233 to 263 (EGMTPLHYAVVCDQFEICKLLLSQSSIDKSI).

It is found in the cytoplasm. Functionally, binds long-chain acyl-coenzyme A molecules with a strong preference for unsaturated C18:1-CoA. Does not bind fatty acids. Plays a role in protein N-myristoylation. The chain is Acyl-CoA-binding domain-containing protein 6 homolog (acbd6) from Dictyostelium discoideum (Social amoeba).